The primary structure comprises 111 residues: Large ribosomal subunit protein eL42 (111 aa).

The Zn(2+) site is built by Cys-12, Cys-15, Cys-72, and Cys-77.

The protein belongs to the eukaryotic ribosomal protein eL42 family. In terms of assembly, component of the large ribosomal subunit.

Its subcellular location is the cytoplasm. Functionally, component of the large ribosomal subunit. The ribosome is a large ribonucleoprotein complex responsible for the synthesis of proteins in the cell. The protein is Large ribosomal subunit protein eL42 (RPL36A) of Oryctolagus cuniculus (Rabbit).